Here is a 320-residue protein sequence, read N- to C-terminus: MTRTHFDSIRAGGLNWSSLPLKLFAGGNAKFWDPADIDFSRDRADWEALTEREREYATRLCAEFIAGEEAVTKDIQPFMSAMRAEGRLGDEMYLTQFAFEEAKHTQVFRMWLDAVGVTDDLHSLIEEVPAYVQIFCEELPAALEALTSDPSPAAQVRASVVYNHVVEGMLALTGYYAWHRICVDRGILPGMQELVRRIGDDERRHMAWGTFTCRRHVAADDANWAVFETHMNELIPVALRLTQEGFALYGDDIPFGLEEGEFLQYSSDRGMRRFGTISSARGRPLAEIDVDYTPLQLEDTFADEDERALTAVKAAAAAAN.

Mn(2+)-binding residues include E68, E101, and H104. The segment at residues 71–162 (VTKDIQPFMS…AAQVRASVVY (92 aa)) is a cross-link (3-(O4'-tyrosyl)-valine (Val-Tyr)). E101 serves as a coordination point for Fe cation. Residues E167, E202, and H205 each coordinate Fe cation.

The protein belongs to the ribonucleoside diphosphate reductase small chain family. R2-like ligand binding oxidase subfamily. In terms of assembly, homodimer. It depends on Fe cation as a cofactor. The cofactor is Mn(2+).

In terms of biological role, probable oxidase that might be involved in lipid metabolism. The sequence is that of R2-like ligand binding oxidase (nrdB) from Mycolicibacterium smegmatis (strain ATCC 700084 / mc(2)155) (Mycobacterium smegmatis).